The primary structure comprises 512 residues: Maturase K (512 aa).

This sequence belongs to the intron maturase 2 family. MatK subfamily.

The protein localises to the plastid. Its subcellular location is the chloroplast. In terms of biological role, usually encoded in the trnK tRNA gene intron. Probably assists in splicing its own and other chloroplast group II introns. The protein is Maturase K of Oenothera glazioviana (Large-flowered evening primrose).